A 105-amino-acid polypeptide reads, in one-letter code: Nucleoid-associated protein SSP2277 (105 aa).

The segment at 1–41 (MRGGGNMQQMMKQMQKMQKKMGEEQEKLKEEKVQGTAGGGM) is disordered. The span at 7–16 (MQQMMKQMQK) shows a compositional bias: low complexity. The span at 20-33 (KMGEEQEKLKEEKV) shows a compositional bias: basic and acidic residues.

It belongs to the YbaB/EbfC family. As to quaternary structure, homodimer.

Its subcellular location is the cytoplasm. The protein localises to the nucleoid. Functionally, binds to DNA and alters its conformation. May be involved in regulation of gene expression, nucleoid organization and DNA protection. The sequence is that of Nucleoid-associated protein SSP2277 from Staphylococcus saprophyticus subsp. saprophyticus (strain ATCC 15305 / DSM 20229 / NCIMB 8711 / NCTC 7292 / S-41).